Consider the following 104-residue polypeptide: Large ribosomal subunit protein bL21 (104 aa).

Belongs to the bacterial ribosomal protein bL21 family. As to quaternary structure, part of the 50S ribosomal subunit. Contacts protein L20.

Functionally, this protein binds to 23S rRNA in the presence of protein L20. In Caldanaerobacter subterraneus subsp. tengcongensis (strain DSM 15242 / JCM 11007 / NBRC 100824 / MB4) (Thermoanaerobacter tengcongensis), this protein is Large ribosomal subunit protein bL21.